A 336-amino-acid polypeptide reads, in one-letter code: L-Ala-D/L-amino acid epimerase (336 aa).

Residues T130 and 152–154 contribute to the substrate site; that span reads KIK. Mg(2+) is bound by residues D178, E204, and D229. Substrate contacts are provided by residues K251 and 301–303; that span reads DMD.

Belongs to the mandelate racemase/muconate lactonizing enzyme family. Mg(2+) is required as a cofactor.

Functionally, catalyzes the epimerization of D-Ala-D-Ala to D-Ala-L-Ala. Has broad substrate specificity and catalyzes the epimerization of a variety of dipeptides containing an N-terminal Ala followed by Ser, Thr, Val, Met, His, Phe or Trp (in vitro). The protein is L-Ala-D/L-amino acid epimerase of Flavobacterium johnsoniae (strain ATCC 17061 / DSM 2064 / JCM 8514 / BCRC 14874 / CCUG 350202 / NBRC 14942 / NCIMB 11054 / UW101) (Cytophaga johnsonae).